Consider the following 588-residue polypeptide: MGTNQTQISDEYVTGNSSGVGGGISDVYGEDSATLDQLVTPWVTSVASGYTLMRDPRYNKGLAFTDKERDAHYITGLLPPVVLSQDVQERKVMHNLRQYTVPLQRYMALMDLQERNERLFYKLLIDNVEELLPVVYTPTVGEACQKYGSIYRRPQGLYISLKEKGKILEVLKNWPQRGIQVIVVTDGERILGLGDLGCQGMGIPVGKLSLYTALGGIRPSACLPITIDVGTNNEKLLNNEFYIGLKQKRANGEEYAEFLQEFMCAVKQNYGEKVLVQFEDFANHHAFELLSKYCSSHLVFNDDIQGTASVVLAGLIAAQKVLGKSLADHTFLFLGAGEAGTGIAELIALKISKETGKPIDETRKKIWLVDSKGLIVSERKESLQHFKQPWAHDHKPVKELLAAVNAIKPTVLIGTSGVGKTFTKEVVEAMATLNEKPLILALSNPTSQAECTAEEAYTWTKGRAIFASGSPFDPVQYDGKKFTPGQANNCYIFPGLGLGLIMSGAIRVRDDMLLAASEALASQVTEENFANGLIYPPFANIRKISANIAASVGAKTYELGLASNLPRPKDLVKMAESCMYSPVYRNFR.

The residue at position 2 (glycine 2) is an N-acetylglycine. Tyrosine 136 (proton donor) is an active-site residue. Arginine 189 contacts NADP(+). Lysine 207 serves as the catalytic Proton acceptor. Residues glutamate 279, aspartate 280, and aspartate 303 each coordinate a divalent metal cation. NADP(+) is bound by residues aspartate 303, 332-348 (LFLGAGEAGTGIAELIA), and asparagine 444.

This sequence belongs to the malic enzymes family. In terms of assembly, homohexamers and homooctamers. It depends on Mg(2+) as a cofactor. Mn(2+) is required as a cofactor. As to expression, mostly expressed in flowers, and, to a lower extent, in stems. In leaves and stems, restricted to the trichomes and trichome basal cells. Also present in the stipules flanking the base of the inflorescence bract leaves and in the meristematic zone of developing lateral roots. In flowers, present in pollen and the abscission zone of developing siliques.

It localises to the cytoplasm. The catalysed reaction is (S)-malate + NADP(+) = pyruvate + CO2 + NADPH. It carries out the reaction oxaloacetate + H(+) = pyruvate + CO2. With respect to regulation, slightly activated by succinate and aspartate. Repressed by fumarate, malate, oxaloacetate and glucose. This is NADP-dependent malic enzyme 3 (NADP-ME3) from Arabidopsis thaliana (Mouse-ear cress).